Consider the following 105-residue polypeptide: Large ribosomal subunit protein uL24 (105 aa).

Belongs to the universal ribosomal protein uL24 family. Part of the 50S ribosomal subunit.

In terms of biological role, one of two assembly initiator proteins, it binds directly to the 5'-end of the 23S rRNA, where it nucleates assembly of the 50S subunit. Functionally, one of the proteins that surrounds the polypeptide exit tunnel on the outside of the subunit. This is Large ribosomal subunit protein uL24 from Parvibaculum lavamentivorans (strain DS-1 / DSM 13023 / NCIMB 13966).